Reading from the N-terminus, the 494-residue chain is UPF0371 protein str1377 (494 aa).

Belongs to the UPF0371 family.

This is UPF0371 protein str1377 from Streptococcus thermophilus (strain CNRZ 1066).